A 407-amino-acid polypeptide reads, in one-letter code: uncharacterized protein (407 aa).

This is an uncharacterized protein from Mycobacterium bovis (strain ATCC BAA-935 / AF2122/97).